Consider the following 394-residue polypeptide: Protein LAX PANICLE 2 (394 aa).

The segment at 1–193 (MVPARSLAHP…PTPRHHHHDV (193 aa)) is disordered. The span at 8–20 (AHPHPHLVRRRRD) shows a compositional bias: basic residues. Residues 60 to 84 (QHDPPKQPPPREADDDHHRIQEREP) are compositionally biased toward basic and acidic residues. Low complexity-rich tracts occupy residues 90–101 (TTTRNQRLQLQL), 119–131 (GTSGSSSGGSSSN), and 146–155 (GPASPGASAG). Pro residues predominate over residues 170–185 (APQPPTPTPTPTPTPT).

In terms of assembly, interacts with LAX1.

It localises to the nucleus. Its function is as follows. Involved in the regulation of shoot branching by controlling axillary meristem (AM) formation. Functions in association with LAX1 to regulate the process of AM formation. Possesses transactivation activity in yeast. This Oryza sativa subsp. japonica (Rice) protein is Protein LAX PANICLE 2.